Consider the following 327-residue polypeptide: GMP reductase (327 aa).

The active-site Thioimidate intermediate is cysteine 176. Residue 205 to 228 (IIADGGIRTHGDIAKSIRFGASMV) coordinates NADP(+).

This sequence belongs to the IMPDH/GMPR family. GuaC type 2 subfamily.

The enzyme catalyses IMP + NH4(+) + NADP(+) = GMP + NADPH + 2 H(+). Its function is as follows. Catalyzes the irreversible NADPH-dependent deamination of GMP to IMP. It functions in the conversion of nucleobase, nucleoside and nucleotide derivatives of G to A nucleotides, and in maintaining the intracellular balance of A and G nucleotides. The chain is GMP reductase from Streptococcus pyogenes serotype M28 (strain MGAS6180).